A 380-amino-acid polypeptide reads, in one-letter code: Putative glutamate--cysteine ligase 2 (380 aa).

It belongs to the glutamate--cysteine ligase type 2 family. YbdK subfamily.

It carries out the reaction L-cysteine + L-glutamate + ATP = gamma-L-glutamyl-L-cysteine + ADP + phosphate + H(+). ATP-dependent carboxylate-amine ligase which exhibits weak glutamate--cysteine ligase activity. The polypeptide is Putative glutamate--cysteine ligase 2 (Pseudomonas entomophila (strain L48)).